The chain runs to 1002 residues: Carboxypeptidase Y (1002 aa).

An N-terminal signal peptide occupies residues 1–18 (MLMKQTFLYFLLTCVVSA). Residues 19-521 (QFNGYVPPEQ…AYLEMLKAEG (503 aa)) constitute a propeptide that is removed on maturation. Disordered stretches follow at residues 51-91 (QEES…TALE), 124-436 (DEDE…NMQS), and 527-546 (AFRD…ADSS). 2 stretches are compositionally biased toward basic and acidic residues: residues 63-81 (PERD…HEFN) and 127-143 (EHVR…EDAP). Residues 144-170 (RRKHGKCKGKGKHHKGKHAKGKGKKSH) show a composition bias toward basic residues. A compositionally biased stretch (basic and acidic residues) spans 171 to 205 (PKPEDDSVFFDDERPKHHEFDDEDREFPAHHEPGE). 15 tandem repeats follow at residues 225-237 (MHHE…PPPP), 238-250 (MHHE…PPPP), 251-263 (MHHE…PPPP), 264-276 (MHHE…PPPP), 277-289 (MHHE…PPPP), 290-302 (MHHE…PPPP), 303-315 (MHHE…PPPP), 316-328 (MHHE…PPPP), 329-341 (MHHE…PPPP), 361-369 (DKEHHKGPK), 370-378 (DKEHHKGPK), 379-387 (DKEHHKGPK), 388-396 (DKEHHKGPK), 397-405 (DKEHHKGPK), and 406-414 (DKEHHKGPK). Positions 225–341 (MHHEPGEHMP…EPGEHMPPPP (117 aa)) are 9 X 13 AA tandem repeats of M-H-H-E-P-G-E-H-M-P-P-P-P. A compositionally biased stretch (basic and acidic residues) spans 343–431 (KHHELEEHEG…PKEKHNERPE (89 aa)). Residues 361-423 (DKEHHKGPKD…KDKEHHQGPK (63 aa)) are 7 X 9 AA tandem repeats of D-K-E-H-H-K-G-P-K. The stretch at 415-423 (DKEHHQGPK) is one 2-7; approximate repeat. Intrachain disulfides connect cysteine 627–cysteine 880, cysteine 776–cysteine 789, cysteine 799–cysteine 822, cysteine 806–cysteine 815, and cysteine 844–cysteine 851. N-linked (GlcNAc...) asparagine glycosylation occurs at asparagine 659. The active site involves serine 715. The active site involves aspartate 921. Residue cysteine 924 coordinates substrate. Histidine 978 is an active-site residue. Methionine 979 provides a ligand contact to substrate.

It belongs to the peptidase S10 family. In terms of assembly, heterodimer of two subunits of 32 kDa and 19 kDa derived from the precursor protein and linked by a disulfide bond.

The protein resides in the vacuole. It catalyses the reaction Release of a C-terminal amino acid with broad specificity.. Its function is as follows. Involved in degradation of small peptides. Digests preferentially peptides containing an aliphatic or hydrophobic residue in P1' position, as well as methionine, leucine or phenylalanine in P1 position of ester substrate. The chain is Carboxypeptidase Y (cpy1) from Schizosaccharomyces pombe (strain 972 / ATCC 24843) (Fission yeast).